Reading from the N-terminus, the 213-residue chain is 3-isopropylmalate dehydratase small subunit (213 aa).

Belongs to the LeuD family. LeuD type 1 subfamily. As to quaternary structure, heterodimer of LeuC and LeuD.

The catalysed reaction is (2R,3S)-3-isopropylmalate = (2S)-2-isopropylmalate. The protein operates within amino-acid biosynthesis; L-leucine biosynthesis; L-leucine from 3-methyl-2-oxobutanoate: step 2/4. Its function is as follows. Catalyzes the isomerization between 2-isopropylmalate and 3-isopropylmalate, via the formation of 2-isopropylmaleate. The sequence is that of 3-isopropylmalate dehydratase small subunit from Neisseria meningitidis serogroup B (strain ATCC BAA-335 / MC58).